The chain runs to 141 residues: MTKVYANSIQQERVVDRIALLERCLDPSNSLPTAKRLVAVAVATILAVALLVVAGLLFSGVLCSPVSVLAASLFFGVGAFLLGGALVGGVLTTEAVTRERLHRSQTLMWNNLCCKTAEVEQKISTASANAKSNDKTRKLGE.

A run of 2 helical transmembrane segments spans residues V38–F58 and V68–G88.

Its subcellular location is the secreted. The protein localises to the host vacuole. It localises to the host pathogen-containing vacuole. The protein resides in the host pathogen-containing vacuole membrane. In terms of biological role, inclusion membrane protein probably involved in early modification events of the chlamydial inclusion. This Chlamydia trachomatis serovar D (strain ATCC VR-885 / DSM 19411 / UW-3/Cx) protein is Inclusion membrane protein D (incD).